We begin with the raw amino-acid sequence, 86 residues long: Small ribosomal subunit protein bS16 (86 aa).

This sequence belongs to the bacterial ribosomal protein bS16 family.

The chain is Small ribosomal subunit protein bS16 from Bordetella bronchiseptica (strain ATCC BAA-588 / NCTC 13252 / RB50) (Alcaligenes bronchisepticus).